The primary structure comprises 129 residues: Prefoldin subunit 6 (129 aa).

Ala2 bears the N-acetylalanine mark. An N6-acetyllysine modification is found at Lys21. The residue at position 66 (Lys66) is an N6-acetyllysine; alternate. Lys66 participates in a covalent cross-link: Glycyl lysine isopeptide (Lys-Gly) (interchain with G-Cter in SUMO1); alternate. Lys66 participates in a covalent cross-link: Glycyl lysine isopeptide (Lys-Gly) (interchain with G-Cter in SUMO2); alternate.

This sequence belongs to the prefoldin subunit beta family. In terms of assembly, heterohexamer of two PFD-alpha type and four PFD-beta type subunits. Component of the PAQosome complex which is responsible for the biogenesis of several protein complexes and which consists of R2TP complex members RUVBL1, RUVBL2, RPAP3 and PIH1D1, URI complex members PFDN2, PFDN6, PDRG1, UXT and URI1 as well as ASDURF, POLR2E and DNAAF10/WDR92.

Binds specifically to cytosolic chaperonin (c-CPN) and transfers target proteins to it. Binds to nascent polypeptide chain and promotes folding in an environment in which there are many competing pathways for nonnative proteins. The chain is Prefoldin subunit 6 (PFDN6) from Bos taurus (Bovine).